Reading from the N-terminus, the 137-residue chain is MLTPKKVKFRKRQKGRLKGDALKGNNVAFGEIGLKVLEHGKLTSQQIEAARVAAMRHIKRGGKMWIRIFPDQPYTAKPLETRQGKGKGAPVGWYAPVKPGRVLYEIKGVNLELAREALTRAAHKLPVKTTIVVREGL.

Belongs to the universal ribosomal protein uL16 family. In terms of assembly, part of the 50S ribosomal subunit.

Functionally, binds 23S rRNA and is also seen to make contacts with the A and possibly P site tRNAs. This Oleidesulfovibrio alaskensis (strain ATCC BAA-1058 / DSM 17464 / G20) (Desulfovibrio alaskensis) protein is Large ribosomal subunit protein uL16.